Here is a 458-residue protein sequence, read N- to C-terminus: Periphilin-1 (458 aa).

Basic and acidic residues-rich tracts occupy residues 1 to 18 (MWSE…ERAP) and 63 to 107 (EGRS…DGFR). Disordered regions lie at residues 1–51 (MWSE…SYNR) and 63–284 (EGRS…LFED). Positions 103 to 109 (RDGFRRK) match the Nuclear localization signal motif. Residue Lys-109 forms a Glycyl lysine isopeptide (Lys-Gly) (interchain with G-Cter in SUMO2) linkage. Ser-110, Ser-114, Ser-133, and Ser-140 each carry phosphoserine. Positions 116–142 (YARERSPYKRDNTFFRESPVGRKDSPH) are enriched in basic and acidic residues. Residues 143–154 (SRSGSSVSSRSY) show a composition bias toward low complexity. Lys-160 is covalently cross-linked (Glycyl lysine isopeptide (Lys-Gly) (interchain with G-Cter in SUMO2)). Ser-161 and Ser-167 each carry phosphoserine. Residue Lys-180 forms a Glycyl lysine isopeptide (Lys-Gly) (interchain with G-Cter in SUMO2) linkage. The span at 181-194 (RQNEGNPERDKERP) shows a compositional bias: basic and acidic residues. A Phosphoserine modification is found at Ser-197. Lys-199 is covalently cross-linked (Glycyl lysine isopeptide (Lys-Gly) (interchain with G-Cter in SUMO2)). Phosphoserine occurs at positions 201 and 205. A compositionally biased stretch (low complexity) spans 205 to 215 (SPSSGSAVSSS). The segment covering 217–230 (VLDKPSRLTEKELA) has biased composition (basic and acidic residues). A Glycyl lysine isopeptide (Lys-Gly) (interchain with G-Cter in SUMO2) cross-link involves residue Lys-227. An N6-acetyllysine; alternate mark is found at Lys-235 and Lys-240. Glycyl lysine isopeptide (Lys-Gly) (interchain with G-Cter in SUMO2); alternate cross-links involve residues Lys-235 and Lys-240. Residues 237 to 246 (AAEKLEKSDE) are compositionally biased toward basic and acidic residues. Residue Ser-325 is modified to Phosphoserine. A Glycyl lysine isopeptide (Lys-Gly) (interchain with G-Cter in SUMO2) cross-link involves residue Lys-328. The interval 345-406 (GQTWQQVPPV…TQLRRTTGAP (62 aa)) is disordered. The span at 377-386 (PQPPQAPQPL) shows a compositional bias: pro residues. Positions 388 to 398 (PRKKRVRRTTQ) are enriched in basic residues. Lys-453 is covalently cross-linked (Glycyl lysine isopeptide (Lys-Gly) (interchain with G-Cter in SUMO2)).

As to quaternary structure, homodimer. Component of the HUSH complex; at least composed of TASOR, PPHLN1 and MPHOSPH8. Interacts with SIN3A and HDAC1. May interact with PPL. Post-translationally, substrate of transglutaminase (in vitro). Ubiquitous.

It localises to the nucleus. The protein resides in the cytoplasm. The protein localises to the chromosome. Functionally, component of the HUSH complex, a multiprotein complex that mediates epigenetic repression. The HUSH complex is recruited to genomic loci rich in H3K9me3 and is probably required to maintain transcriptional silencing by promoting recruitment of SETDB1, a histone methyltransferase that mediates further deposition of H3K9me3. In the HUSH complex, contributes to the maintenance of the complex at chromatin. Acts as a transcriptional corepressor and regulates the cell cycle, probably via the HUSH complex. The HUSH complex is also involved in the silencing of unintegrated retroviral DNA: some part of the retroviral DNA formed immediately after infection remains unintegrated in the host genome and is transcriptionally repressed. May be involved in epithelial differentiation by contributing to epidermal integrity and barrier formation. This chain is Periphilin-1, found in Homo sapiens (Human).